Reading from the N-terminus, the 274-residue chain is Lectizyme (274 aa).

Residues 1–16 (MKFFAVFALCVASVSA) form the signal peptide. A Peptidase S1 domain is found at 32–268 (IINGHEAEKG…FDKWIEDSIE (237 aa)). C57 and C73 are joined by a disulfide. Residues H72 and D119 each act as charge relay system in the active site. 2 cysteine pairs are disulfide-bonded: C188-C204 and C215-C244. S219 (charge relay system) is an active-site residue.

Belongs to the peptidase S1 family. As to expression, expressed in the midgut.

Its subcellular location is the secreted. Protein with lectin and protease activity involved in the establishment of trypanosome infections in tsetse flies. Binds D-glucosamine and agglutinates bloodstream-form trypanosomes and rabbit red blood cells. Capable of inducing transformation of bloodstream-form trypanosomes into procyclic (midgut) forms in vitro. The polypeptide is Lectizyme (Gpl) (Glossina austeni (Savannah tsetse fly)).